The primary structure comprises 1012 residues: Ubiquitin-like modifier-activating enzyme 7 (1012 aa).

One copy of the 1-1 repeat lies at 23 to 159 (GSPAMQRIQG…DTRGLVGQLF (137 aa)). Residues 23-575 (GSPAMQRIQG…GTWGSATVFM (553 aa)) form a 2 approximate repeats region. Ser266 carries the post-translational modification Phosphoserine. The 1-2 repeat unit spans residues 423–575 (GAGFQEKLRR…GTWGSATVFM (153 aa)). ATP is bound at residue 442–471 (AIGCELLKVFALVGLGAGNSGGLTVVDMDH). Cys599 acts as the Glycyl thioester intermediate in catalysis.

Belongs to the ubiquitin-activating E1 family. As to quaternary structure, (Microbial infection) Interacts with human cytomegalovirus proteins NEC2/UL50 and UL26; these interactions inhibit ISGylation and cause proteasomal degradation of UBA7. (Microbial infection) Interacts with rotavirus non-structural protein 5 (NSP5); this interaction promotes UBA7 proteasomal degradation. In terms of assembly, monomer. Binds and is involved in the conjugation of G1P2/ISG15. In terms of processing, ISGylated. Ubiquitinated by RNF170. In terms of tissue distribution, expressed in a variety of normal and tumor cell types, but is reduced in lung cancer cell lines.

It localises to the cytoplasm. It is found in the nucleus. Its pathway is protein modification; protein ubiquitination. In terms of biological role, E1-activating enzyme that catalyzes the covalent conjugation of the ubiquitin-like protein product of ISG15 to additional interferon stimulated proteins (ISGs) as well as other cellular proteins such as P53 in a process termed protein ISGylation. Plays an essential role in antiviral immunity together with ISG15 by restricting the replication of many viruses including rabies virus, influenza virus, sindbis virus, rotavirus or human cytomegalovirus. For example, ISG15 modification of influenza A protein NS1 disrupts the association of the NS1 with importin-alpha leading to NS1 nuclear import inhibition. ISGylation of human cytomegalovirs protein UL26 regulates its stability and inhibits its activities to suppress NF-kappa-B signaling. The chain is Ubiquitin-like modifier-activating enzyme 7 from Homo sapiens (Human).